Reading from the N-terminus, the 1013-residue chain is Tolloid-like protein 1 (1013 aa).

The signal sequence occupies residues 1-30 (MGLQALSPRMLLWLVVSGIVFSRVLWVCAG). The propeptide occupies 31–147 (LDYDYTFDGN…EQSEKNRVPR (117 aa)). A disordered region spans residues 124–150 (QNNTMKGKAPPKLSEQSEKNRVPRAAT). In terms of domain architecture, Peptidase M12A spans 148-347 (AATSRTERIW…AQARKLYRCP (200 aa)). A glycan (N-linked (GlcNAc...) asparagine) is linked at N169. 4 disulfide bridges follow: C190/C346, C210/C232, C212/C213, and C349/C375. A Zn(2+)-binding site is contributed by H240. E241 is an active-site residue. H244 and H250 together coordinate Zn(2+). CUB domains are found at residues 349 to 461 (CGET…YEAI) and 462 to 574 (CGGE…FFKE). N359 and N390 each carry an N-linked (GlcNAc...) asparagine glycan. 15 cysteine pairs are disulfide-bonded: C402–C424, C462–C488, C515–C537, C578–C590, C586–C599, C601–C614, C618–C644, C671–C693, C734–C745, C741–C754, C756–C769, C774–C800, C827–C849, C887–C917, and C944–C966. An EGF-like 1; calcium-binding domain is found at 574-615 (EEDECAKPDRGGCEQRCLNTLGSYQCACEPGYELGPDRRSCE). Residues 618–730 (CGGLLTKLNG…KGFKAHFFSD (113 aa)) enclose the CUB 3 domain. An N-linked (GlcNAc...) asparagine glycan is attached at N626. The region spanning 730–770 (DKDECSKDNGGCQHECVNTMGSYTCQCRNGFVLHENKHDCK) is the EGF-like 2; calcium-binding domain. CUB domains lie at 774 to 886 (CEQK…HSTE) and 887 to 1003 (CGGR…YKSI).

Requires Zn(2+) as cofactor. In terms of tissue distribution, highly expressed in brain and kidney and weakly in lung, skeletal muscle. A perceptible level of expression is observed in heart and testis.

Its subcellular location is the secreted. Functionally, protease which processes procollagen C-propeptides, such as chordin, pro-biglycan and pro-lysyl oxidase. Required for the embryonic development, especially heart development. Predominant protease, which in the development, influences dorsal-ventral patterning and skeletogenesis. This is Tolloid-like protein 1 (Tll1) from Mus musculus (Mouse).